Here is a 206-residue protein sequence, read N- to C-terminus: MARYLGPKCKLSRREGTDLFLKSGVKANDEKCKMNTAPGQHGARRARLSDYGLQLREKQKVRRMYGVLEGQFKKYYVEANRRKGNTGATLLEILESRLDNVVYRMGFAATRAEARQLVVHKGIMLNGHTCNVPSAQVKAGDVVAVREKSKKQLRIQNAIELAKHRKELSWIDVNTDSLEGTMKSSPDRSELSADINEQLIIELYSK.

The S4 RNA-binding domain occupies 96–156; the sequence is SRLDNVVYRM…EKSKKQLRIQ (61 aa).

This sequence belongs to the universal ribosomal protein uS4 family. In terms of assembly, part of the 30S ribosomal subunit. Contacts protein S5. The interaction surface between S4 and S5 is involved in control of translational fidelity.

Its function is as follows. One of the primary rRNA binding proteins, it binds directly to 16S rRNA where it nucleates assembly of the body of the 30S subunit. Functionally, with S5 and S12 plays an important role in translational accuracy. This Francisella philomiragia subsp. philomiragia (strain ATCC 25017 / CCUG 19701 / FSC 153 / O#319-036) protein is Small ribosomal subunit protein uS4.